The primary structure comprises 543 residues: Membrane protein insertase YidC (543 aa).

The helical transmembrane segment at 7-27 (FLLIGLAMVSFLLWQQWQVDY) threads the bilayer. The tract at residues 30-61 (QPAQPVESQQTTGSDAPNSNGDVPIATPTNKS) is disordered. Positions 35-61 (VESQQTTGSDAPNSNGDVPIATPTNKS) are enriched in polar residues. 4 helical membrane passes run 341-361 (FAFLQFIHSLIGNWGFSIILI), 421-441 (GGCFPLLLQMPIFLALYWVLL), 451-471 (FIFWITDLSVKDPYFVLPILT), and 499-519 (PVAMSLFFFIFPAGLVLYWLI).

The protein belongs to the OXA1/ALB3/YidC family. Type 1 subfamily. In terms of assembly, interacts with the Sec translocase complex via SecD. Specifically interacts with transmembrane segments of nascent integral membrane proteins during membrane integration.

The protein resides in the cell inner membrane. Required for the insertion and/or proper folding and/or complex formation of integral membrane proteins into the membrane. Involved in integration of membrane proteins that insert both dependently and independently of the Sec translocase complex, as well as at least some lipoproteins. Aids folding of multispanning membrane proteins. The chain is Membrane protein insertase YidC from Pseudoalteromonas atlantica (strain T6c / ATCC BAA-1087).